The sequence spans 89 residues: Small ribosomal subunit protein uS15 (89 aa).

This sequence belongs to the universal ribosomal protein uS15 family. In terms of assembly, part of the 30S ribosomal subunit. Forms a bridge to the 50S subunit in the 70S ribosome, contacting the 23S rRNA.

One of the primary rRNA binding proteins, it binds directly to 16S rRNA where it helps nucleate assembly of the platform of the 30S subunit by binding and bridging several RNA helices of the 16S rRNA. Functionally, forms an intersubunit bridge (bridge B4) with the 23S rRNA of the 50S subunit in the ribosome. The chain is Small ribosomal subunit protein uS15 from Thermobifida fusca (strain YX).